A 190-amino-acid polypeptide reads, in one-letter code: TATA box-binding protein-like 1 (190 aa).

This sequence belongs to the TBP family. Binds TFIIA and TFIIB.

The protein resides in the cytoplasm. The protein localises to the nucleus. Its function is as follows. Part of a specialized transcription system that mediates the transcription of most ribosomal proteins through the 5'-TCT-3' motif which is a core promoter element at these genes. Seems to also mediate the transcription of NF1. Does not bind the TATA box. The polypeptide is TATA box-binding protein-like 1 (TBPL1) (Pongo abelii (Sumatran orangutan)).